Reading from the N-terminus, the 171-residue chain is UPF0312 protein SE_0264 (171 aa).

This sequence belongs to the UPF0312 family.

The polypeptide is UPF0312 protein SE_0264 (Staphylococcus epidermidis (strain ATCC 12228 / FDA PCI 1200)).